Here is a 1361-residue protein sequence, read N- to C-terminus: Cell migration-inducing and hyaluronan-binding protein (1361 aa).

The signal sequence occupies residues 1–30 (MGAAGRQDFLFKAMLTISWLTLTCFPGATS). A G8 domain is found at 44–166 (QPWNPGHDQD…KKLSWTFLNK (123 aa)). N-linked (GlcNAc...) asparagine glycans are attached at residues asparagine 119, asparagine 165, asparagine 312, asparagine 370, and asparagine 420. In terms of domain architecture, GG-type lectin 1 spans 176-317 (GGYFFERSWG…GEYFNVSLSS (142 aa)). The segment at 295–591 (AAARVFKLFQ…IHHTFSRCVT (297 aa)) is necessary for its endoplasmic reticulum (ER) retention and interaction with HSPA5. 4 PbH1 repeats span residues 572–594 (DPPT…TVHG), 595–617 (SNGL…FTED), 719–741 (IPLG…IIDN), and 798–819 (GGDV…TLAS). N-linked (GlcNAc...) asparagine glycosylation is found at asparagine 889 and asparagine 921. A GG-type lectin 2 domain is found at 1227–1361 (NDFAYIEVDG…PIPVVKKKKL (135 aa)).

It belongs to the CEMIP family. In terms of assembly, interacts with EPHA2 and ITPR3. Interacts with HSPA5/BIP; the interaction induces calcium leakage from the endoplasmic reticulum and cell migration. Interacts with clathrin heavy chain/CLTC. Post-translationally, N-glycosylated; glycosylation is not necessary for HA-binding. As to expression, expressed in dermal and in synovial fibroblasts. Strongly expressed in gastric cancers compared with the paired normal tissues. Strongly expressed in both ductal carcinoma and invasive breast cancer cells compared with benign epithelial cells (at protein level). Strongly expressed in brain, placenta, prostate, breast, lung and testis. Expressed in fibroblasts, epithelial cells and cancer cells. In ear, it is specifically expressed in inner ear. Expressed in cochlea and vestibule tissues. Strongly expressed in gastric cancers compared with the paired normal tissues. Strongly expressed in colon adenocarcinomas compared with normal colonic mucosas. Strongly expressed in breast cancer as compared to normal breast tissue.

The protein resides in the nucleus. The protein localises to the cytoplasm. It localises to the endoplasmic reticulum. Its subcellular location is the cell membrane. It is found in the membrane. The protein resides in the clathrin-coated pit. The protein localises to the secreted. The catalysed reaction is Random hydrolysis of (1-&gt;4)-linkages between N-acetyl-beta-D-glucosamine and D-glucuronate residues in hyaluronate.. Activity is up-regulated by histamine. Mediates depolymerization of hyaluronic acid (HA) via the cell membrane-associated clathrin-coated pit endocytic pathway. Binds to hyaluronic acid. Hydrolyzes high molecular weight hyaluronic acid to produce an intermediate-sized product, a process that may occur through rapid vesicle endocytosis and recycling without intracytoplasmic accumulation or digestion in lysosomes. Involved in hyaluronan catabolism in the dermis of the skin and arthritic synovium. Positively regulates epithelial-mesenchymal transition (EMT), and hence tumor cell growth, invasion and cancer dissemination. In collaboration with HSPA5/BIP, promotes cancer cell migration in a calcium and PKC-dependent manner. May be involved in hearing. This chain is Cell migration-inducing and hyaluronan-binding protein, found in Homo sapiens (Human).